A 312-amino-acid polypeptide reads, in one-letter code: Malate dehydrogenase (312 aa).

NAD(+) contacts are provided by residues 7–13 (GAAGGIG) and D34. Positions 81 and 87 each coordinate substrate. NAD(+) contacts are provided by residues N94 and 117-119 (ITN). The substrate site is built by N119 and R153. Catalysis depends on H177, which acts as the Proton acceptor. Residue M227 participates in NAD(+) binding.

Belongs to the LDH/MDH superfamily. MDH type 1 family. In terms of assembly, homodimer.

It catalyses the reaction (S)-malate + NAD(+) = oxaloacetate + NADH + H(+). Its function is as follows. Catalyzes the reversible oxidation of malate to oxaloacetate. The sequence is that of Malate dehydrogenase from Salmonella dublin (strain CT_02021853).